Consider the following 165-residue polypeptide: Peptide methionine sulfoxide reductase MsrA (165 aa).

Residue Cys-10 is part of the active site.

This sequence belongs to the MsrA Met sulfoxide reductase family.

The enzyme catalyses L-methionyl-[protein] + [thioredoxin]-disulfide + H2O = L-methionyl-(S)-S-oxide-[protein] + [thioredoxin]-dithiol. It carries out the reaction [thioredoxin]-disulfide + L-methionine + H2O = L-methionine (S)-S-oxide + [thioredoxin]-dithiol. Its function is as follows. Has an important function as a repair enzyme for proteins that have been inactivated by oxidation. Catalyzes the reversible oxidation-reduction of methionine sulfoxide in proteins to methionine. The chain is Peptide methionine sulfoxide reductase MsrA from Campylobacter jejuni subsp. jejuni serotype O:23/36 (strain 81-176).